A 712-amino-acid chain; its full sequence is Asp/Glu-specific dipeptidyl-peptidase (712 aa).

Positions 1-18 are cleaved as a signal peptide; it reads MKRFFKMALFLGVSALYG. Residues His84, Asp220, and Ser647 each act as charge relay system in the active site.

It belongs to the peptidase S46 family.

Functionally, catalyzes the removal of dipeptides from the N-terminus of oligopeptides. Shows a strict specificity for acidic residues (Asp or Glu) in the P1 position, and has probably a hydrophobic residue preference at the P2 position. Preferentially cleaves the synthetic substrate Leu-Asp-methylcoumaryl-7-amide (Leu-Asp-MCA) as compared to Leu-Glu-MCA. This Capnocytophaga gingivalis protein is Asp/Glu-specific dipeptidyl-peptidase (dpp11).